The chain runs to 179 residues: ECF RNA polymerase sigma factor SigF (179 aa).

The sigma-70 factor domain-2 stretch occupies residues 33–93 (RLRAYFMRRM…KLIDHWRRRK (61 aa)). A Polymerase core binding motif is present at residues 51-64 (DLVQETLLAVHLKR). The tract at residues 123-170 (ALASLPQRQRMLVSDVKLTGLSLAEAGARAGISEGAAKVALHRALKAL) is sigma-70 factor domain-4. Positions 145–164 (LAEAGARAGISEGAAKVALH) form a DNA-binding region, H-T-H motif.

Belongs to the sigma-70 factor family. ECF subfamily.

The protein localises to the cytoplasm. Its function is as follows. Sigma factors are initiation factors that promote the attachment of RNA polymerase to specific initiation sites and are then released. Extracytoplasmic function (ECF) sigma factors are held in an inactive form by a cognate anti-sigma factor (NrsF in this case) until they are released. Up-regulates expression of 4 operons (sigF-nrsF, CCNA_02834, CCNA_03001 to CCNA_02999 and CCNA_03363 to CCNA_03366) in response to potassium dichromate (K(2)Cr(2)O(7)) or cadmium chloride (CdCl(2)). Overexpression of sigF leads to higher expression of its regulon. This chain is ECF RNA polymerase sigma factor SigF, found in Caulobacter vibrioides (strain NA1000 / CB15N) (Caulobacter crescentus).